We begin with the raw amino-acid sequence, 1982 residues long: Ras guanine nucleotide exchange factor V (1982 aa).

15 LRR repeats span residues 1–26, 47–68, 69–94, 105–128, 130–151, 164–187, 188–210, 212–234, 236–257, 261–284, 286–307, 308–330, 331–352, 354–376, and 378–399; these read MGNI…SLEG, LTQL…ITNL, SNLS…PFKP, NENL…VFVL, NLKQ…LCGG, ACQL…IGDQ, LTTL…SFSN, VSLT…LCTL, KLVH…HTLG, LPSL…ILEI, SLRV…IGNL, LNLN…IGEL, INLR…EFSK, SKLN…LHSL, and QLLR…LIKS. Residues 1–1831 lie on the Extracellular side of the membrane; sequence MGNINSICLN…IANAFYELRN (1831 aa). Disordered stretches follow at residues 414–436, 457–532, and 615–654; these read YGST…STHG, NQIN…NKKQ, and NNSG…RRGS. 2 stretches are compositionally biased toward low complexity: residues 415–436 and 457–495; these read GSTM…STHG and NQIN…TPNG. The LRR 16 repeat unit spans residues 443 to 466; that stretch reads DILLSSVTLNNSILNQINNNNNNN. Residues 506–520 are compositionally biased toward polar residues; it reads LTISRSLFRGNSSNL. The stretch at 515–567 forms a coiled coil; sequence GNSSNLESEKEDFINKKQQQQQQQQQQQQQQQQQQQQQQQQQQQQQQQQQQLG. The stretch at 592–615 is one LRR 17 repeat; sequence EDDIQKMQLGLEALSNLETSIGSN. Residues 616–642 show a composition bias toward gly residues; it reads NSGGGDSMNGSGGNINNSGGSGSGCGT. 2 LRR repeats span residues 657–684 and 773–796; these read LPPT…VMSG and HSNL…LSSS. Disordered stretches follow at residues 756-778 and 807-829; these read QSST…NLSQ and LQFQ…SNQP. Residues 832–1236 enclose the GBD/FH3 domain; it reads TIVPSFSKFK…QIKYSIDRYG (405 aa). LRR repeat units lie at residues 979 to 1003, 1075 to 1100, 1239 to 1263, and 1689 to 1712; these read LLGI…GYCL, SPYV…VFKI, VPAI…RWVD, and VQNM…FVDL. The 123-residue stretch at 1595-1717 folds into the N-terminal Ras-GEF domain; that stretch reads KDRRVSSVTL…LFVDLSTKSY (123 aa). One can recognise a Ras-GEF domain in the interval 1747–1974; sequence DEIEIARQLS…YEMSLSAEPR (228 aa). A helical transmembrane segment spans residues 1832 to 1848; sequence YHLLMAIISGLNASPVL. Topologically, residues 1849–1982 are cytoplasmic; that stretch reads RLKYTKGKLS…PRNAERYDIQ (134 aa). LRR repeat units lie at residues 1865–1888 and 1917–1941; these read LDTL…LAAA and RINF…LFPY.

It localises to the membrane. Its function is as follows. Promotes the exchange of Ras-bound GDP by GTP. The chain is Ras guanine nucleotide exchange factor V (gefV) from Dictyostelium discoideum (Social amoeba).